The primary structure comprises 516 residues: L-amino-acid oxidase (516 aa).

The N-terminal stretch at 1-18 (MNVFFMFSLLFLAALGSC) is a signal peptide. Residues C28 and C191 are joined by a disulfide bond. Residues 61 to 62 (MA), 81 to 82 (EA), R89, and 105 to 108 (GPMR) contribute to the FAD site. Residue R108 participates in substrate binding. A glycan (N-linked (GlcNAc...) (complex) asparagine) is linked at N190. Position 241 (H241) interacts with substrate. V279 lines the FAD pocket. C349 and C430 are joined by a disulfide. N379 carries an N-linked (GlcNAc...) (complex) asparagine glycan. Y390 lines the substrate pocket. Residues E475 and 482 to 487 (GWIDST) each bind FAD. Residue 482–483 (GW) participates in substrate binding.

Homodimer; non-covalently linked. FAD serves as cofactor. Post-translationally, N-glycosylated at Asn-190 and Asn-379 with bis-sialylated, biantennary, core-fucosylated dodecasaccharide (composed of N-acetylglucosamine, fucose, mannose, galactose, and sialic acid residues). In terms of tissue distribution, expressed by the venom gland.

It is found in the secreted. It carries out the reaction an L-alpha-amino acid + O2 + H2O = a 2-oxocarboxylate + H2O2 + NH4(+). It catalyses the reaction L-leucine + O2 + H2O = 4-methyl-2-oxopentanoate + H2O2 + NH4(+). The enzyme catalyses L-phenylalanine + O2 + H2O = 3-phenylpyruvate + H2O2 + NH4(+). The catalysed reaction is L-tryptophan + O2 + H2O = indole-3-pyruvate + H2O2 + NH4(+). It carries out the reaction L-methionine + O2 + H2O = 4-methylsulfanyl-2-oxobutanoate + H2O2 + NH4(+). It catalyses the reaction L-isoleucine + O2 + H2O = (S)-3-methyl-2-oxopentanoate + H2O2 + NH4(+). The enzyme catalyses L-arginine + O2 + H2O = 5-guanidino-2-oxopentanoate + H2O2 + NH4(+). The catalysed reaction is L-aspartate + O2 + H2O = oxaloacetate + H2O2 + NH4(+). It carries out the reaction L-histidine + O2 + H2O = 3-(imidazol-5-yl)pyruvate + H2O2 + NH4(+). It catalyses the reaction L-2-aminohexanoate + O2 + H2O = 2-oxohexanoate + H2O2 + NH4(+). The enzyme catalyses L-2-aminopentanoate + O2 + H2O = 2-oxopentanoate + H2O2 + NH4(+). Catalyzes an oxidative deamination of predominantly hydrophobic and aromatic L-amino acids, thus producing hydrogen peroxide that may contribute to the diverse toxic effects of this enzyme. Shows high affinity for L-Phe, L-Trp, L-Met, L-Leu, and L-Ile, moderate affinity for L-Arg, L-Asp, and L-His, and very low affinity for L-Gln, L-Lys, and L-Ala. Also shows high activity on L-norleucine (L-2-aminohexanoate), and L-norvaline (L-2-aminopentanoate) and a weak activity on L-ornithine and L-aminobutyric acid. Also exhibits diverse biological activities, such as hemorrhage, hemolysis, edema, apoptosis of vascular endothelial cells or tumor cell lines, and antiparasitic activities, as well as regulation of platelet aggregation. Its effect on platelets is controversial, since it either induces aggregation or inhibits agonist-induced aggregation. These different effects are probably due to different experimental conditions. A possible explanation of high efficacy it that LAAO may bind to target cells through its sialylated glycan moiety that would bind to sialic acid-binding lectins (siglec) on target cells. This interaction may result in production of locally high concentrations of hydrogen peroxide in or near the binding interface, leading, in turn to oxidative damage of the siglec or another adjacent cell structural elements. This chain is L-amino-acid oxidase, found in Calloselasma rhodostoma (Malayan pit viper).